The following is a 416-amino-acid chain: Casein kinase I isoform epsilon (416 aa).

Positions 9–277 constitute a Protein kinase domain; it reads YRLGRKIGSG…YLRQLFRNLF (269 aa). ATP-binding positions include 15–23 and Lys38; that span reads IGSGSFGDI. Asp128 functions as the Proton acceptor in the catalytic mechanism. Over residues 301-318 the composition is skewed to basic and acidic residues; it reads PEDVDRERREHEREERMG. The disordered stretch occupies residues 301 to 416; that stretch reads PEDVDRERRE…TSVPFDHLGK (116 aa). 2 positions are modified to phosphoserine: Ser343 and Ser354. The span at 351–365 shows a compositional bias: polar residues; sequence TPASRIQQTGNTSPR. Phosphothreonine is present on Thr362. Ser363 is subject to Phosphoserine. An Omega-N-methylarginine modification is found at Arg382. Residues Ser389, Ser405, and Ser408 each carry the phosphoserine modification.

The protein belongs to the protein kinase superfamily. CK1 Ser/Thr protein kinase family. Casein kinase I subfamily. As to quaternary structure, monomer. Component of the circadian core oscillator, which includes the CRY proteins, CLOCK, or NPAS2, ARTNL/BMAL1 or ARTNL2/BMAL2, CSNK1D and/or CSNK1E, TIMELESS and the PER proteins. Interacts with ANKRD6. Interacts with PER1. Interacts with DBNDD2, LRP5, LRP6 and SOCS3. Interacts with SNAI1 (via zinc fingers). Interacts with DDX3X; this interaction greatly enhances CSNK1E affinity for ATP and DVL2 phosphorylation, but inhibits DDX3X ATPase/helicase activity. In the presence of RNA, the interaction is decreased. Interacts with FAM83A, FAM83B, FAM83E and FAM83H (via DUF1669). Post-translationally, autophosphorylated. Partially dephosphorylated by PPP5C. May be dephosphorylated by PP1. In terms of tissue distribution, expressed in all tissues examined, including brain, heart, lung, liver, pancreas, kidney, placenta and skeletal muscle. Expressed in monocytes and lymphocytes but not in granulocytes.

The protein resides in the cytoplasm. The protein localises to the nucleus. The enzyme catalyses L-seryl-[protein] + ATP = O-phospho-L-seryl-[protein] + ADP + H(+). It catalyses the reaction L-threonyl-[protein] + ATP = O-phospho-L-threonyl-[protein] + ADP + H(+). Its activity is regulated as follows. Phosphorylation leads to a decrease in the catalytic activity. In terms of biological role, casein kinases are operationally defined by their preferential utilization of acidic proteins such as caseins as substrates. Participates in Wnt signaling. Phosphorylates DVL1. Phosphorylates DVL2. Phosphorylates NEDD9/HEF1. Central component of the circadian clock. In balance with PP1, determines the circadian period length, through the regulation of the speed and rhythmicity of PER1 and PER2 phosphorylation. Controls PER1 and PER2 nuclear transport and degradation. Inhibits cytokine-induced granuloytic differentiation. The protein is Casein kinase I isoform epsilon (Csnk1e) of Mus musculus (Mouse).